The primary structure comprises 201 residues: NADH-quinone oxidoreductase subunit C (201 aa).

Belongs to the complex I 30 kDa subunit family. In terms of assembly, NDH-1 is composed of 14 different subunits. Subunits NuoB, C, D, E, F, and G constitute the peripheral sector of the complex.

It localises to the cell inner membrane. It carries out the reaction a quinone + NADH + 5 H(+)(in) = a quinol + NAD(+) + 4 H(+)(out). Its function is as follows. NDH-1 shuttles electrons from NADH, via FMN and iron-sulfur (Fe-S) centers, to quinones in the respiratory chain. The immediate electron acceptor for the enzyme in this species is believed to be ubiquinone. Couples the redox reaction to proton translocation (for every two electrons transferred, four hydrogen ions are translocated across the cytoplasmic membrane), and thus conserves the redox energy in a proton gradient. This chain is NADH-quinone oxidoreductase subunit C, found in Mesorhizobium japonicum (strain LMG 29417 / CECT 9101 / MAFF 303099) (Mesorhizobium loti (strain MAFF 303099)).